A 196-amino-acid polypeptide reads, in one-letter code: Imidazole glycerol phosphate synthase subunit HisH (196 aa).

A Glutamine amidotransferase type-1 domain is found at 2 to 196; the sequence is KVAVVKYNAG…ERVLRNFLDL (195 aa). The active-site Nucleophile is the Cys-77. Residues His-178 and Glu-180 contribute to the active site.

As to quaternary structure, heterodimer of HisH and HisF.

It is found in the cytoplasm. It carries out the reaction 5-[(5-phospho-1-deoxy-D-ribulos-1-ylimino)methylamino]-1-(5-phospho-beta-D-ribosyl)imidazole-4-carboxamide + L-glutamine = D-erythro-1-(imidazol-4-yl)glycerol 3-phosphate + 5-amino-1-(5-phospho-beta-D-ribosyl)imidazole-4-carboxamide + L-glutamate + H(+). The catalysed reaction is L-glutamine + H2O = L-glutamate + NH4(+). The protein operates within amino-acid biosynthesis; L-histidine biosynthesis; L-histidine from 5-phospho-alpha-D-ribose 1-diphosphate: step 5/9. IGPS catalyzes the conversion of PRFAR and glutamine to IGP, AICAR and glutamate. The HisH subunit catalyzes the hydrolysis of glutamine to glutamate and ammonia as part of the synthesis of IGP and AICAR. The resulting ammonia molecule is channeled to the active site of HisF. The sequence is that of Imidazole glycerol phosphate synthase subunit HisH from Bacteroides thetaiotaomicron (strain ATCC 29148 / DSM 2079 / JCM 5827 / CCUG 10774 / NCTC 10582 / VPI-5482 / E50).